Here is a 193-residue protein sequence, read N- to C-terminus: NADH-quinone oxidoreductase subunit B (193 aa).

Positions 72, 73, 137, and 167 each coordinate [4Fe-4S] cluster.

It belongs to the complex I 20 kDa subunit family. As to quaternary structure, NDH-1 is composed of 14 different subunits. Subunits NuoB, C, D, E, F, and G constitute the peripheral sector of the complex. Requires [4Fe-4S] cluster as cofactor.

The protein resides in the cell inner membrane. It catalyses the reaction a quinone + NADH + 5 H(+)(in) = a quinol + NAD(+) + 4 H(+)(out). In terms of biological role, NDH-1 shuttles electrons from NADH, via FMN and iron-sulfur (Fe-S) centers, to quinones in the respiratory chain. Couples the redox reaction to proton translocation (for every two electrons transferred, four hydrogen ions are translocated across the cytoplasmic membrane), and thus conserves the redox energy in a proton gradient. This is NADH-quinone oxidoreductase subunit B from Brucella anthropi (strain ATCC 49188 / DSM 6882 / CCUG 24695 / JCM 21032 / LMG 3331 / NBRC 15819 / NCTC 12168 / Alc 37) (Ochrobactrum anthropi).